Here is a 254-residue protein sequence, read N- to C-terminus: Glutamate racemase (254 aa).

Residues D7 to S8 and Y39 to G40 contribute to the substrate site. C70 (proton donor/acceptor) is an active-site residue. Substrate-binding positions include N71 to T72 and E147. C178 serves as the catalytic Proton donor/acceptor. Substrate is bound at residue T179–H180.

This sequence belongs to the aspartate/glutamate racemases family. As to quaternary structure, homodimer.

The catalysed reaction is L-glutamate = D-glutamate. The protein operates within cell wall biogenesis; peptidoglycan biosynthesis. In terms of biological role, provides the (R)-glutamate required for cell wall biosynthesis. Converts L- or D-glutamate to D- or L-glutamate, respectively, but not other amino acids such as alanine, aspartate, and glutamine. In Aquifex pyrophilus, this protein is Glutamate racemase.